The primary structure comprises 465 residues: DEAD-box ATP-dependent RNA helicase 55 (465 aa).

The short motif at 17 to 45 (FSELKPPLSEDIIEALDRSGFEVCTPVQA) is the Q motif element. Residues 48 to 219 (IPFLCSHKDV…KAGLRNPYLK (172 aa)) enclose the Helicase ATP-binding domain. Residue 61–68 (AATGSGKT) participates in ATP binding. The DEAD box signature appears at 167 to 170 (DEAD). In terms of domain architecture, Helicase C-terminal spans 228–422 (QLVHLLIENK…KDKLQQEKRG (195 aa)). The tract at residues 413–465 (KDKLQQEKRGKRKKSSKEAVDDSNKASRKRKLTGRQRQTIQTAQDEEEMNLRL) is disordered. Residues 428-437 (SKEAVDDSNK) are compositionally biased toward basic and acidic residues. The span at 456–465 (QDEEEMNLRL) shows a compositional bias: acidic residues.

The protein belongs to the DEAD box helicase family. DDX55/SPB4 subfamily.

It carries out the reaction ATP + H2O = ADP + phosphate + H(+). This is DEAD-box ATP-dependent RNA helicase 55 (RH55) from Arabidopsis thaliana (Mouse-ear cress).